The chain runs to 145 residues: uncharacterized protein (145 aa).

Residues 4 to 24 (IYMLVALLISSLVLFAGCVQN) form a helical membrane-spanning segment.

The protein localises to the membrane. This is an uncharacterized protein from Methanocaldococcus jannaschii (strain ATCC 43067 / DSM 2661 / JAL-1 / JCM 10045 / NBRC 100440) (Methanococcus jannaschii).